Consider the following 60-residue polypeptide: Protein YmjC (60 aa).

Positions 40-60 (HKPYPTNKMQTTSGKKVIQDR) are disordered.

This chain is Protein YmjC (ymjC), found in Escherichia coli (strain K12).